A 670-amino-acid chain; its full sequence is MDSRNVLIIYAVNVERKLNAAAHHTSEYQTKKLVLRRGQIFTLKVILNRPLQPQDELKVTFTSGQRDPPYMVELDPVTSYRSKGWQVKIAKQSGVEVILNVISAADAVVGRYKMRVNEYKAGVFYLLFNPWCSDDSVFMASEEERAEYILNDTGYMYMGFAKQIKEKPWTFGQFEKHILSCCFNLLFQLENNEMQNPVLVSRAICTMMCAANGGVLMGNWTGDYADGTAPYVWTSSVPILQQHYVTRMPVRYGQCWVFSGILTTALRAVGIPARSVTNFESAHDTEKNLTVDIYLDESGKTIPHLTKDSVWNFHVWTDAWMKRQDLPHGYDGWQVLDSTPQEISDGGFRTGPSPLTAIRQGLIQMKYDTTFVFTEVNGDKFIWLVKQNQEREKNILIAVETASLGKKISTKMVGENRREDITLQYRFPEGSPEERKVMAKASGKPSDDKLNSRTLNNSLQISVLQNSLELGAPIYLTITLKRKTATPQNVNISCSLNLQTYTGNKKTNLGVIQKTVQIHGQESRVFLTMDASYYIYKLGMVDDEMVIGGFIIAEIVDSGERVATDTTLCFLYSAFSVEMPSTGKVKQPLVITSKFTNTLPIPLTNIKFSVESLGLANMKSWEQETVPPGKTITFQMECTPVKAGPQKFIVKFISRQVKEVHAEKVVLISK.

N151 and N219 each carry an N-linked (GlcNAc...) asparagine glycan. Residue C255 is part of the active site. N288 carries N-linked (GlcNAc...) asparagine glycosylation. Catalysis depends on residues H314 and D337. 4 residues coordinate Ca(2+): N377, D379, E429, and E434. N-linked (GlcNAc...) asparagine glycosylation is found at N456 and N491.

This sequence belongs to the transglutaminase superfamily. Transglutaminase family. Homodimer. Ca(2+) serves as cofactor. In terms of tissue distribution, expressed in the coagulating gland and in the dorsal part of the prostate. Not expressed in the brain, heart, kidney, liver, lung, muscle, pancreas, spleen, stomach, testis and thymus.

The protein resides in the secreted. The enzyme catalyses L-glutaminyl-[protein] + L-lysyl-[protein] = [protein]-L-lysyl-N(6)-5-L-glutamyl-[protein] + NH4(+). In terms of biological role, associated with the mammalian reproductive process. Plays an important role in the formation of the seminal coagulum through the cross-linking of specific proteins present in the seminal plasma. Transglutaminase is also required to stabilize the copulatory plug. The sequence is that of Protein-glutamine gamma-glutamyltransferase 4 from Mus musculus (Mouse).